A 117-amino-acid polypeptide reads, in one-letter code: Con-Ins T3 (117 aa).

The first 24 residues, 1–24 (MTTSFYFLLMALGLLLYVCQSSFG), serve as a signal peptide directing secretion. A propeptide spanning residues 25 to 29 (NQHTR) is cleaved from the precursor. Residue Pro34 is modified to 4-hydroxyproline; partial. 3 disulfide bridges follow: Cys38/Cys101, Cys50/Cys114, and Cys100/Cys105. The propeptide at 53–94 (KRNDAGKKRGQASPLWQRGGSLSMLKARAKRNEAFHLQRAHR) is c peptide. The residue at position 98 (Glu98) is a 4-carboxyglutamate. Position 109 is a 4-carboxyglutamate; partial (Glu109). Residue Cys114 is modified to Cysteine amide. The propeptide occupies 116-117 (NS).

Belongs to the insulin family. As to quaternary structure, heterodimer of A and B chains; disulfide-linked. In terms of tissue distribution, expressed by the venom gland.

The protein localises to the secreted. This venom insulin facilitates prey capture by rapidly inducing hypoglycemic shock. It is one of the smallest known insulin found in nature and lacks the C-terminal segment of the B chain that, in human insulin, mediates engagement of the insulin receptor (INSR) and assembly of the hormone's hexameric storage form. Despite lacking this segment, it both binds and activates human insulin receptor (long isoform (HIR-B) OF INSR) with only a 10-fold lower potency. In vivo, intraperitoneal injection of this peptide into zebrafish lowers blood glucose with the same potency than human insulin. In addition, when applied to water, this peptide reduces overall locomotor activity of zebrafish larvae, observed as a significant decrease in the percentage of time spent swimming and movement frequency. This is Con-Ins T3 from Conus tulipa (Fish-hunting cone snail).